The primary structure comprises 564 residues: Protein NRT1/ PTR FAMILY 5.16 (564 aa).

A run of 2 helical transmembrane segments spans residues 49–69 (FAYF…LGQS) and 80–100 (WSGT…AYLG). Phosphothreonine is present on Thr104. Helical transmembrane passes span 110–130 (LIYI…LMGL), 145–165 (FFWV…GQGG), 192–212 (FFNW…IVVV), 220–240 (WALG…LFLF), 327–347 (IPIW…ATFF), 358–378 (ILPG…LSIF), 408–428 (IGAG…VEMK), 450–470 (IWWF…SLVG), 486–506 (IGLA…GFLI), and 533–553 (YFYW…LLLS).

It belongs to the major facilitator superfamily. Proton-dependent oligopeptide transporter (POT/PTR) (TC 2.A.17) family. As to expression, expressed in shoots and roots.

It localises to the membrane. The protein is Protein NRT1/ PTR FAMILY 5.16 (NPF5.16) of Arabidopsis thaliana (Mouse-ear cress).